The following is an 886-amino-acid chain: DNA double-strand break repair Rad50 ATPase (886 aa).

ATP-binding positions include R13, 33-39 (NGAGKSS), and Q128. Coiled-coil stretches lie at residues 183–360 (EQIK…LLET) and 400–433 (KEIT…LKSA). Residues 392-489 (LSKAKEEEKE…RLEKVEKALE (98 aa)) form the Zinc-hook domain. Residues C437 and C440 each contribute to the Zn(2+) site. 2 coiled-coil regions span residues 489–518 (EKQE…DAEK) and 545–713 (SSAS…KKVE). 792 to 797 (FLSGGE) is an ATP binding site.

The protein belongs to the SMC family. RAD50 subfamily. As to quaternary structure, homodimer. Forms a heterotetramer composed of two Mre11 subunits and two Rad50 subunits. Zn(2+) is required as a cofactor.

Functionally, part of the Rad50/Mre11 complex, which is involved in the early steps of DNA double-strand break (DSB) repair. The complex may facilitate opening of the processed DNA ends to aid in the recruitment of HerA and NurA. Rad50 controls the balance between DNA end bridging and DNA resection via ATP-dependent structural rearrangements of the Rad50/Mre11 complex. The protein is DNA double-strand break repair Rad50 ATPase of Archaeoglobus fulgidus (strain ATCC 49558 / DSM 4304 / JCM 9628 / NBRC 100126 / VC-16).